A 783-amino-acid chain; its full sequence is Rabenosyn-5 (783 aa).

Ala2 carries the post-translational modification N-acetylalanine. The residue at position 3 (Ser3) is a Phosphoserine. The segment at 14–37 (FLCPLCLKDLQSFYQLQSHYEEEH) adopts a C2H2-type zinc-finger fold. The necessary for the correct targeting to endosomes stretch occupies residues 99–262 (RSHLSDFKKH…HCKDKLLKRE (164 aa)). The FYVE-type zinc-finger motif lies at 156 to 259 (DQDVPFCPDC…CCTHCKDKLL (104 aa)). Zn(2+) is bound by residues Cys162, Cys165, Cys178, Cys181, Cys186, and Cys189. Polar residues predominate over residues 206–223 (KDSLSTHTSPSQSPNSVH). Residues 206 to 240 (KDSLSTHTSPSQSPNSVHGSRRGSISSMSSVSSVL) are disordered. Ser214, Ser218, Ser225, and Ser229 each carry phosphoserine. Over residues 227–239 (RGSISSMSSVSSV) the composition is skewed to low complexity. Cys251 and Cys254 together coordinate Zn(2+). Positions 263-499 (QQMDEKEHTP…QLQDEYDQQQ (237 aa)) are necessary for interaction with RAB4A. The necessary for interaction with EHD1 stretch occupies residues 263–783 (QQMDEKEHTP…TLAKQKGAPN (521 aa)). Coiled coils occupy residues 377-412 (TKEQ…KLEE) and 471-531 (QAKA…ELER). 2 stretches are compositionally biased toward basic and acidic residues: residues 387-399 (KRKQ…RTVE) and 405-414 (ESRRKLEERQ). Residues 387–433 (KRKQDLEQKRTVERQAALESRRKLEERQSGLASHTANGDVRSLRGIP) are disordered. The 20-residue stretch at 495–514 (YDQQQTEKAIELSRKQAEEE) folds into the UIM domain. 2 disordered regions span residues 569–638 (SYSL…SPTE) and 663–733 (FEED…EEHI). Polar residues-rich tracts occupy residues 571-584 (SLDQ…SSTA) and 610-623 (TLPQ…SDKA). The necessary for interaction with RAB5A stretch occupies residues 627-783 (PFDEDDLSSP…TLAKQKGAPN (157 aa)). The span at 663–673 (FEEDAEEEEVA) shows a compositional bias: acidic residues. Ser686 carries the phosphoserine modification. The segment covering 721–733 (VDSDSGMEAEEHI) has biased composition (acidic residues).

Interacts with EHD1, RAB4A, RAB5A, RAB22A, RAB24 and VPS45. Binds simultaneously to RAB4A and RAB5A in vitro. Interacts with RAB4A and RAB5A that has been activated by GTP binding.

The protein resides in the cell membrane. Its subcellular location is the early endosome membrane. Functionally, rab4/Rab5 effector protein acting in early endocytic membrane fusion and membrane trafficking of recycling endosomes. Required for endosome fusion either homotypically or with clathrin coated vesicles. Plays a role in the lysosomal trafficking of CTSD/cathepsin D from the Golgi to lysosomes. Also promotes the recycling of transferrin directly from early endosomes to the plasma membrane. Binds phospholipid vesicles containing phosphatidylinositol 3-phosphate (PtdInsP3). Plays a role in the recycling of transferrin receptor to the plasma membrane. In Mus musculus (Mouse), this protein is Rabenosyn-5.